A 360-amino-acid polypeptide reads, in one-letter code: Tryptophan--tRNA ligase, mitochondrial (360 aa).

The transit peptide at 1-18 (MALFSVRKARECWRFIRA) directs the protein to the mitochondrion. Residues Gln42 and 48–51 (HLGN) contribute to the ATP site. Asp167 lines the L-tryptophan pocket. Residues 179-181 (GED), Val217, and 226-230 (KMSKS) contribute to the ATP site.

The protein belongs to the class-I aminoacyl-tRNA synthetase family.

It localises to the mitochondrion matrix. The protein resides in the mitochondrion. The enzyme catalyses tRNA(Trp) + L-tryptophan + ATP = L-tryptophyl-tRNA(Trp) + AMP + diphosphate + H(+). Catalyzes the attachment of tryptophan to tRNA(Trp) in a two-step reaction: tryptophan is first activated by ATP to form Trp-AMP and then transferred to the acceptor end of tRNA(Trp). The sequence is that of Tryptophan--tRNA ligase, mitochondrial (Wars2) from Mus musculus (Mouse).